Here is a 100-residue protein sequence, read N- to C-terminus: NADH-quinone oxidoreductase subunit K (100 aa).

3 consecutive transmembrane segments (helical) span residues 4 to 24 (LQHG…GLLI), 28 to 48 (LLFM…AFVV), and 60 to 80 (VMYI…LALL).

Belongs to the complex I subunit 4L family. NDH-1 is composed of 13 different subunits. Subunits NuoA, H, J, K, L, M, N constitute the membrane sector of the complex.

The protein resides in the cell inner membrane. It carries out the reaction a quinone + NADH + 5 H(+)(in) = a quinol + NAD(+) + 4 H(+)(out). Functionally, NDH-1 shuttles electrons from NADH, via FMN and iron-sulfur (Fe-S) centers, to quinones in the respiratory chain. The immediate electron acceptor for the enzyme in this species is believed to be ubiquinone. Couples the redox reaction to proton translocation (for every two electrons transferred, four hydrogen ions are translocated across the cytoplasmic membrane), and thus conserves the redox energy in a proton gradient. The chain is NADH-quinone oxidoreductase subunit K from Pectobacterium carotovorum subsp. carotovorum (strain PC1).